We begin with the raw amino-acid sequence, 883 residues long: METNVPEKKILGFPEEMNSTIQFLSVEKTTCRLPVSIKFNIPKKISTKRRRISVEEEEEEEDENKTKLSSWEKVLSSDEILRLREVSRRKYLTDRENKKVEELRDERKDDDDVEGYRFPDAYDQEGCIDQKKRFDVAKERYCERRRSGRVVTEQEAWEDHQAQKARVRFGAKDKKQVVDGYEFVFDDLTGFVEESSEAETGKHRGCYSKTAAEKAREGREFLPIHGYREELLKLIEENQVLVIVGETGSGKTTQIPQYLQEAGYTKRGKIGCTQPRRVAAMSVASRVAQEVGVKLGHEVGYSIRFEDCTSEKTVIKYMTDGMLLRELLIEPKLDSYSVIIIDEAHERTLSTDILFALVKDVAKVRPDLRLIISSATLEAKKFSEYFDSARIYLIPGRRYPVEKLFRKCPEPDYLETVIRTVVQIHQTEAIGDILVFLTGQEEIETVETNLKRRMMDLGTKGSEIIICPIYSNLPTPLQAKVFEPAPKGTRKVVLATNIAETSLTIDGVKYVIDPGYCKINSYNPRTGMESLLVTPISKASAAQRAGRSGRTGPGKCFRLYNIKDLEPTTIPEIQRANLASVVLTLKSLGIQDVFNFDFMDPPPENALLKALELLYALGALDEIGEITKVGERMVEFPVDPMLSKMIVGSEKYKCSKEIITIAAMLSVGNSVFYRPKNQQVFADKARMDFYEDTENVGDHIALLRVYNSWKEENYSTQWCCEKFIQSKSMKRARDIRDQLLGLLNKIGVELTSNPNDLDAIKKAILAGFFPHSAKLQKNGSYRRVKEPQTVYVHPNSGLFGASPSKWLVYHELVLTTKEYMRHTTEMKPEWLIEIAPHYYKLKDIEDTRPKKTQRRIEEASTSKVDTNKKTRTSKVDTNKKSKR.

Positions 232–395 (LKLIEENQVL…FDSARIYLIP (164 aa)) constitute a Helicase ATP-binding domain. ATP is bound at residue 245 to 252 (GETGSGKT). The DEAH box signature appears at 342-345 (DEAH). Residues 416–589 (TVIRTVVQIH…SVVLTLKSLG (174 aa)) enclose the Helicase C-terminal domain. The segment at 845–883 (EDTRPKKTQRRIEEASTSKVDTNKKTRTSKVDTNKKSKR) is disordered.

The protein belongs to the DEAD box helicase family. DEAH subfamily. PRP2 sub-subfamily. In terms of tissue distribution, predominantly expressed in flowers.

The enzyme catalyses ATP + H2O = ADP + phosphate + H(+). May be involved in pre-mRNA splicing. The sequence is that of Probable pre-mRNA-splicing factor ATP-dependent RNA helicase DEAH8 from Arabidopsis thaliana (Mouse-ear cress).